The sequence spans 250 residues: 5'-nucleotidase SurE (250 aa).

A divalent metal cation is bound by residues Asp8, Asp9, Ser39, and Asn91.

Belongs to the SurE nucleotidase family. A divalent metal cation is required as a cofactor.

It localises to the cytoplasm. The catalysed reaction is a ribonucleoside 5'-phosphate + H2O = a ribonucleoside + phosphate. In terms of biological role, nucleotidase that shows phosphatase activity on nucleoside 5'-monophosphates. The sequence is that of 5'-nucleotidase SurE from Shewanella halifaxensis (strain HAW-EB4).